We begin with the raw amino-acid sequence, 280 residues long: Large ribosomal subunit protein uL2 (280 aa).

2 disordered regions span residues 29 to 58 (PEKSLLRPLSKTGGRNSHGHITTRHRGGGH) and 225 to 280 (VMNP…NKKR). Residues 45–58 (SHGHITTRHRGGGH) show a composition bias toward basic residues. Residues 253 to 269 (KEGRTRKPKRYSDDMIV) are compositionally biased toward basic and acidic residues. Residues 270-280 (RRRRANKNKKR) show a composition bias toward basic residues.

This sequence belongs to the universal ribosomal protein uL2 family. As to quaternary structure, part of the 50S ribosomal subunit. Forms a bridge to the 30S subunit in the 70S ribosome.

Functionally, one of the primary rRNA binding proteins. Required for association of the 30S and 50S subunits to form the 70S ribosome, for tRNA binding and peptide bond formation. It has been suggested to have peptidyltransferase activity; this is somewhat controversial. Makes several contacts with the 16S rRNA in the 70S ribosome. The polypeptide is Large ribosomal subunit protein uL2 (Corynebacterium glutamicum (strain R)).